A 670-amino-acid polypeptide reads, in one-letter code: Solute carrier organic anion transporter family member 1A6 (670 aa).

Topologically, residues 1–20 (MGEPGKRVGIHRVRCFAKIK) are cytoplasmic. Residues 21 to 40 (VFLLALIWAYISKILSGVYM) form a helical membrane-spanning segment. At 41 to 59 (STMLTQLERQFNISTSIVG) the chain is on the extracellular side. A glycan (N-linked (GlcNAc...) asparagine) is linked at Asn52. Residues 60–80 (LINGSFEMGNLLVIVFVSYFG) form a helical membrane-spanning segment. Over 81-86 (TKLHRP) the chain is Cytoplasmic. A helical membrane pass occupies residues 87–111 (IMIGVGCAVMGLGCFIISLPHFLMG). Residues 112-155 (RYEYETTISPTSNLSSNSFLCVENRSQTLKPTQDPAECVKEIKS) lie on the Extracellular side of the membrane. N-linked (GlcNAc...) asparagine glycans are attached at residues Asn124 and Asn135. The helical transmembrane segment at 156–184 (LMWIYVLVGNIIRGIGETPIMPLGISYIE) threads the bilayer. Residues 185-203 (DFAKSENSPLYIGILEVGK) are Cytoplasmic-facing. Residues 204 to 224 (MIGPILGYLMGPFCANIYVDT) form a helical membrane-spanning segment. At 225 to 242 (GSVNTDDLTITPTDTRWV) the chain is on the extracellular side. Residues 243–267 (GAWWIGFLVCAGVNVLTSIPFFFFP) form a helical membrane-spanning segment. Residues 268–311 (KTLPKEGLQDNGDGTENAKEEKHRDKAKEENQGIIKEFFLMMKN) are Cytoplasmic-facing. A helical transmembrane segment spans residues 312–333 (LFCNPIYMLCVLTSVLQVNGVA). Topologically, residues 334–353 (NIVIYKPKYLEHHFGISTAK) are extracellular. A helical transmembrane segment spans residues 354-377 (AVFLIGLYTTPSVSAGYLISGFIM). Residues 378–381 (KKLK) lie on the Cytoplasmic side of the membrane. A helical transmembrane segment spans residues 382–405 (ITLKKAAIIALCLFMSECLLSLCN). Residues 406 to 513 (FMLTCDTTPI…PDCANKLQYF (108 aa)) are Extracellular-facing. One can recognise a Kazal-like domain in the interval 433 to 488 (NKFLSDCNTRCNCLTKTWDPVCGNNGLAYMSPCLAGCEKSVGTGANMVFQNCSCIR). 3 disulfide bridges follow: Cys439–Cys469, Cys445–Cys465, and Cys454–Cys486. Asn483 and Asn492 each carry an N-linked (GlcNAc...) asparagine glycan. Residues 514 to 536 (LIITVFCCFFYSLATIPGYMVFL) form a helical membrane-spanning segment. Residues 537-545 (RCMKSEEKS) are Cytoplasmic-facing. A helical transmembrane segment spans residues 546 to 571 (LGIGLQAFFMRLFAGIPAPIYFGALI). At 572–605 (DRTCLHWGTLKCGEPGACRTYEVSSFRRLYLGLP) the chain is on the extracellular side. Residues 606–623 (AALRGSIILPSFFILRLI) form a helical membrane-spanning segment. Residues 624–670 (RKLQIPGDTDSSEIELAETKPTEKESECTDMHKSSKVENDGELKTKL) lie on the Cytoplasmic side of the membrane. Residue Thr632 is modified to Phosphothreonine. The interval 633–670 (DSSEIELAETKPTEKESECTDMHKSSKVENDGELKTKL) is disordered. Ser634 and Ser635 each carry phosphoserine. Residues 640 to 670 (AETKPTEKESECTDMHKSSKVENDGELKTKL) are compositionally biased toward basic and acidic residues.

This sequence belongs to the organo anion transporter (TC 2.A.60) family. Kidney specific.

Its subcellular location is the cell membrane. Its function is as follows. May mediate the Na(+)-independent transport of organic anions. This Mus musculus (Mouse) protein is Solute carrier organic anion transporter family member 1A6 (Slco1a6).